The following is a 137-amino-acid chain: MRTLWIVAVWLMGVEGNLYQFGKMIKHKTGKSALLSYSAYGCYCGWGGQGKPQDATDHCCFVHDCCYGEVSGCYPKTAFTLKFENQDIICGDEDPCNRAVCECDRVAAICFGENVNTSDKKYLFYSSSYCEEESEQC.

Residues 1 to 16 form the signal peptide; the sequence is MRTLWIVAVWLMGVEG. 7 disulfide bridges follow: Cys-42-Cys-130, Cys-44-Cys-60, Cys-59-Cys-110, Cys-65-Cys-137, Cys-66-Cys-103, Cys-73-Cys-96, and Cys-90-Cys-101. Ca(2+)-binding residues include Tyr-43, Gly-45, and Gly-47. His-63 is an active-site residue. Asp-64 lines the Ca(2+) pocket. The active site involves Asp-104.

Belongs to the phospholipase A2 family. Group II subfamily. D49 sub-subfamily. Ca(2+) serves as cofactor. Post-translationally, glycosylated (2.5%). As to expression, expressed by the venom gland.

It is found in the secreted. The enzyme catalyses a 1,2-diacyl-sn-glycero-3-phosphocholine + H2O = a 1-acyl-sn-glycero-3-phosphocholine + a fatty acid + H(+). In terms of biological role, snake venom phospholipase A2 (PLA2) that inhibits blood coagulation and platelet aggregation induced by ADP and arachidonic acid. Inhibits tumor cell adhesion and migration in a dose-dependent manner. Abolishes the attachment of human brain microvascular endothelial cells (HBMEC) to fibrinogen (IC(50)=0.12 uM) and dramatically reduces its adhesion to fibronectin (IC(50)=0.12 uM), whereas no effect is observed on type I collagen, vitronectin or laminin 1. Also blocks the cell migration toward fibronectin and fibrinogen. These effects are not dependent of the catalytic activity, but are mediated by alpha-5/beta-1 (ITGA5/ITGB1) and alpha-v-containing (ITGAV) integrins. Also shows anti-angiogenic activity in chicken chorioallantoix membrane assay. Has a relatively high enzymatic activity. PLA2 catalyzes the calcium-dependent hydrolysis of the 2-acyl groups in 3-sn-phosphoglycerides. This is Acidic phospholipase A2 CC-PLA2-1 from Cerastes cerastes (Horned desert viper).